Reading from the N-terminus, the 705-residue chain is Polyribonucleotide nucleotidyltransferase (705 aa).

Positions 486 and 492 each coordinate Mg(2+). Residues 553-612 enclose the KH domain; sequence PRIYTMKINPEKIKDVIGKGGSVIRALTDETGTTIEIEDDGTIKIAATDGDKAKHAIRRI. The 69-residue stretch at 622–690 folds into the S1 motif domain; the sequence is GRIYAGKVTR…RQGRIRLSIK (69 aa).

Belongs to the polyribonucleotide nucleotidyltransferase family. In terms of assembly, component of the RNA degradosome, which is a multiprotein complex involved in RNA processing and mRNA degradation. Requires Mg(2+) as cofactor.

The protein resides in the cytoplasm. The enzyme catalyses RNA(n+1) + phosphate = RNA(n) + a ribonucleoside 5'-diphosphate. Involved in mRNA degradation. Catalyzes the phosphorolysis of single-stranded polyribonucleotides processively in the 3'- to 5'-direction. The chain is Polyribonucleotide nucleotidyltransferase from Yersinia pestis bv. Antiqua (strain Nepal516).